Reading from the N-terminus, the 444-residue chain is Ribosomal protein uS12 methylthiotransferase RimO (444 aa).

The 117-residue stretch at 2–118 (PSIGLLSLGC…IVEVVNHALE (117 aa)) folds into the MTTase N-terminal domain. [4Fe-4S] cluster is bound by residues C11, C47, C81, C156, C160, and C163. A Radical SAM core domain is found at 142-372 (STPSYTAYVK…MKLQREISLS (231 aa)). In terms of domain architecture, TRAM spans 375 to 444 (QKRIGQEIEV…EYDLMGELAQ (70 aa)).

The protein belongs to the methylthiotransferase family. RimO subfamily. [4Fe-4S] cluster serves as cofactor.

The protein localises to the cytoplasm. The catalysed reaction is L-aspartate(89)-[ribosomal protein uS12]-hydrogen + (sulfur carrier)-SH + AH2 + 2 S-adenosyl-L-methionine = 3-methylsulfanyl-L-aspartate(89)-[ribosomal protein uS12]-hydrogen + (sulfur carrier)-H + 5'-deoxyadenosine + L-methionine + A + S-adenosyl-L-homocysteine + 2 H(+). Functionally, catalyzes the methylthiolation of an aspartic acid residue of ribosomal protein uS12. The protein is Ribosomal protein uS12 methylthiotransferase RimO of Desulforamulus reducens (strain ATCC BAA-1160 / DSM 100696 / MI-1) (Desulfotomaculum reducens).